Here is a 192-residue protein sequence, read N- to C-terminus: Xanthine phosphoribosyltransferase (192 aa).

Residues Leu20 and Asn27 each coordinate xanthine. 128 to 132 (ANGDA) contacts 5-phospho-alpha-D-ribose 1-diphosphate. Lys156 provides a ligand contact to xanthine.

The protein belongs to the purine/pyrimidine phosphoribosyltransferase family. Xpt subfamily. Homodimer.

Its subcellular location is the cytoplasm. It carries out the reaction XMP + diphosphate = xanthine + 5-phospho-alpha-D-ribose 1-diphosphate. It participates in purine metabolism; XMP biosynthesis via salvage pathway; XMP from xanthine: step 1/1. Functionally, converts the preformed base xanthine, a product of nucleic acid breakdown, to xanthosine 5'-monophosphate (XMP), so it can be reused for RNA or DNA synthesis. The sequence is that of Xanthine phosphoribosyltransferase from Staphylococcus carnosus (strain TM300).